The following is a 498-amino-acid chain: 3-octaprenyl-4-hydroxybenzoate carboxy-lyase (498 aa).

Position 175 (Asn175) interacts with Mn(2+). Residues 178 to 180, 192 to 194, and 197 to 198 contribute to the prenylated FMN site; these read IYR, RWL, and RG. Residue Glu241 coordinates Mn(2+). The active-site Proton donor is Asp290.

It belongs to the UbiD family. Homohexamer. Requires prenylated FMN as cofactor. Mn(2+) is required as a cofactor.

It localises to the cell membrane. It catalyses the reaction a 4-hydroxy-3-(all-trans-polyprenyl)benzoate + H(+) = a 2-(all-trans-polyprenyl)phenol + CO2. It participates in cofactor biosynthesis; ubiquinone biosynthesis. In terms of biological role, catalyzes the decarboxylation of 3-octaprenyl-4-hydroxy benzoate to 2-octaprenylphenol, an intermediate step in ubiquinone biosynthesis. In Yersinia pseudotuberculosis serotype I (strain IP32953), this protein is 3-octaprenyl-4-hydroxybenzoate carboxy-lyase.